Consider the following 201-residue polypeptide: MNNIQSLDKLTQIISRLPGIGTRTAMRLALYLFDCDDEYLKEFSDVLSSLHENIKLCQVCYSLSDNDICDICSNDKREHNKICIVESYPDMLAIEKTEEYNGVYHILGGLISPLKGIGISDIRIKELIERVNNNSIEEIMIAFSASLEADTTASYIYKTLKDNNFNGRITRITYGISLASDIENADSRSLARSILDRVDMN.

Residues 57–72 form a C4-type zinc finger; sequence CQVCYSLSDNDICDIC. One can recognise a Toprim domain in the interval 80–177; that stretch reads NKICIVESYP…RITRITYGIS (98 aa).

The protein belongs to the RecR family.

Functionally, may play a role in DNA repair. It seems to be involved in an RecBC-independent recombinational process of DNA repair. It may act with RecF and RecO. The chain is Recombination protein RecR from Brachyspira hyodysenteriae (strain ATCC 49526 / WA1).